The sequence spans 558 residues: FRIGIDA-like protein 3 (558 aa).

Residues 9-102 are a coiled coil; that stretch reads SLMDSTSSKI…ALERLQKKRD (94 aa). The span at 454–463 shows a compositional bias: basic and acidic residues; that stretch reads AKADKKRATE. Residues 454 to 494 are disordered; sequence AKADKKRATEPMKPQPKRPRGAQPRVTDNNNNINNNKTGYG.

It belongs to the Frigida family.

This is FRIGIDA-like protein 3 (FRL3) from Arabidopsis thaliana (Mouse-ear cress).